Reading from the N-terminus, the 376-residue chain is 28S rRNA (uridine-N(3))-methyltransferase (376 aa).

Disordered stretches follow at residues 1 to 33 and 49 to 71; these read MAER…EEKK and AQEE…DRGR. Basic and acidic residues predominate over residues 15–33; it reads HGQRIEWRKWKQQKKEEKK. Thr289, Arg292, Gly312, Asn341, and Thr342 together coordinate S-adenosyl-L-homocysteine. S-adenosyl-L-methionine is bound by residues Arg292, Gly312, Asn341, and Thr342.

The protein belongs to the class IV-like SAM-binding methyltransferase superfamily. Interacts with INCA1.

The protein localises to the cytoplasm. It is found in the cytoskeleton. The protein resides in the spindle. Its subcellular location is the chromosome. It localises to the centromere. The protein localises to the kinetochore. It is found in the microtubule organizing center. The protein resides in the centrosome. It catalyses the reaction uridine in 28S rRNA + S-adenosyl-L-methionine = N(3)-methyluridine in 28S rRNA + S-adenosyl-L-homocysteine + H(+). Its function is as follows. S-adenosyl-L-methionine-dependent methyltransferase that specifically methylates the N3 position of a uridine in 28S rRNA. Required for association of the centrosomes with the poles of the bipolar mitotic spindle during metaphase. Also involved in chromosome alignment. May promote centrosome maturation probably by recruiting A-kinase anchor protein AKAP9 to centrosomes in early mitosis. Binds specifically to miRNA MIR145 hairpin, regulates MIR145 expression at a postranscriptional level. The sequence is that of 28S rRNA (uridine-N(3))-methyltransferase from Homo sapiens (Human).